Consider the following 354-residue polypeptide: MRVTDFSFELPESLIAHYPQPERSRCRLLSLEGPTGALTHGTFTDLLDKLNPGDLLVFNNTRVIPARLFGRKASGGKIEVLVERMLDDKRILAHIRASKAPKPGTELLLGDDESIHATMTARHGALFEVEFNDPRPVLDILNAIGHMPLPPYIDRPDEDADRELYQTVYSEKPGAVAAPTAGLHFDEPLLAALREKGIEMAFVTLHVGAGTFQPVRVDTIEDHIMHSEYAEVPQEVVDAVLAAKARGNRVIAVGTTSVRSLESAAQAAKNDLIEPFFGDTQIFIYPGYQYKVIDALITNFHLPESTLIMLVSAFAGYQHTMNAYKTAVEQKYRFFSYGDAMFITYNPQAISERP.

Belongs to the QueA family. As to quaternary structure, monomer.

Its subcellular location is the cytoplasm. It catalyses the reaction 7-aminomethyl-7-carbaguanosine(34) in tRNA + S-adenosyl-L-methionine = epoxyqueuosine(34) in tRNA + adenine + L-methionine + 2 H(+). It functions in the pathway tRNA modification; tRNA-queuosine biosynthesis. Its function is as follows. Transfers and isomerizes the ribose moiety from AdoMet to the 7-aminomethyl group of 7-deazaguanine (preQ1-tRNA) to give epoxyqueuosine (oQ-tRNA). This Salmonella dublin (strain CT_02021853) protein is S-adenosylmethionine:tRNA ribosyltransferase-isomerase.